The chain runs to 589 residues: Phenylalanine--tRNA ligase beta subunit (589 aa).

The B5 domain maps to 302 to 379; that stretch reads LAYRKEMVRA…IAYGYSNIQM (78 aa). 4 residues coordinate Mg(2+): aspartate 357, aspartate 363, glutamate 366, and aspartate 367.

Belongs to the phenylalanyl-tRNA synthetase beta subunit family. Type 2 subfamily. Heterotetramer; dimer of two heterodimers formed by FARSA and FARSB. Mg(2+) serves as cofactor.

It is found in the cytoplasm. The catalysed reaction is tRNA(Phe) + L-phenylalanine + ATP = L-phenylalanyl-tRNA(Phe) + AMP + diphosphate + H(+). This Pongo abelii (Sumatran orangutan) protein is Phenylalanine--tRNA ligase beta subunit (FARSB).